The primary structure comprises 224 residues: Putative N-acetylmannosamine-6-phosphate 2-epimerase (224 aa).

Belongs to the NanE family.

The enzyme catalyses an N-acyl-D-glucosamine 6-phosphate = an N-acyl-D-mannosamine 6-phosphate. The protein operates within amino-sugar metabolism; N-acetylneuraminate degradation; D-fructose 6-phosphate from N-acetylneuraminate: step 3/5. Converts N-acetylmannosamine-6-phosphate (ManNAc-6-P) to N-acetylglucosamine-6-phosphate (GlcNAc-6-P). In Staphylococcus carnosus (strain TM300), this protein is Putative N-acetylmannosamine-6-phosphate 2-epimerase.